Here is a 268-residue protein sequence, read N- to C-terminus: Interleukin-1 beta (268 aa).

A propeptide spanning residues 1–115 (MAAVPDTSDM…DNWDEGYVCD (115 aa)) is cleaved from the precursor.

The protein belongs to the IL-1 family. In terms of assembly, monomer. In its precursor form, weakly interacts with full-length MEFV; the mature cytokine does not interact at all. Interacts with integrins ITGAV:ITGBV and ITGA5:ITGB1; integrin-binding is required for IL1B signaling. Interacts with cargo receptor TMED10; the interaction is direct and is required for the secretion of IL1B mature form. Interacts with HSP90AB1; the interaction facilitates cargo translocation into the ERGIC. Interacts with HSP90B1; the interaction facilitates cargo translocation into the ERGIC.

It localises to the cytoplasm. The protein resides in the cytosol. The protein localises to the secreted. Its subcellular location is the lysosome. It is found in the extracellular exosome. Functionally, potent pro-inflammatory cytokine. Initially discovered as the major endogenous pyrogen, induces prostaglandin synthesis, neutrophil influx and activation, T-cell activation and cytokine production, B-cell activation and antibody production, and fibroblast proliferation and collagen production. Promotes Th17 differentiation of T-cells. Synergizes with IL12/interleukin-12 to induce IFNG synthesis from T-helper 1 (Th1) cells. Plays a role in angiogenesis by inducing VEGF production synergistically with TNF and IL6. Involved in transduction of inflammation downstream of pyroptosis: its mature form is specifically released in the extracellular milieu by passing through the gasdermin-D (GSDMD) pore. The sequence is that of Interleukin-1 beta (IL1B) from Equus caballus (Horse).